The following is a 137-amino-acid chain: Cucumber peeling cupredoxin (137 aa).

Gln1 is subject to Pyrrolidone carboxylic acid. The region spanning 3–107 (TVHIVGDNTG…GQKLSINVVA (105 aa)) is the Phytocyanin domain. Cu cation is bound by residues His46, Cys89, His94, and Gln99. A disulfide bridge connects residues Cys60 and Cys95. Asn109 carries an N-linked (GlcNAc...) asparagine glycan. Residues 112-137 (VSMPPPSSSPPSSVMPPPVMPPPSPS) form a disordered region. Positions 114-137 (MPPPSSSPPSSVMPPPVMPPPSPS) are enriched in pro residues. Pro115 carries the 4-hydroxyproline; partial modification. 4-hydroxyproline is present on residues Pro116, Pro117, Pro121, and Pro122. 4-hydroxyproline; partial is present on Pro127. Residues Pro128, Pro129, Pro133, Pro134, and Pro136 each carry the 4-hydroxyproline modification.

This chain is Cucumber peeling cupredoxin, found in Cucumis sativus (Cucumber).